Here is a 1222-residue protein sequence, read N- to C-terminus: ATP-dependent helicase/nuclease subunit A (1222 aa).

The UvrD-like helicase ATP-binding domain maps to 39–495 (QKRTAQQIEA…ILLKENFRSQ (457 aa)). An ATP-binding site is contributed by 60–67 (ASAGSGKT). The 287-residue stretch at 524 to 810 (QLIAGSHAQT…NLMTIHKSKG (287 aa)) folds into the UvrD-like helicase C-terminal domain.

It belongs to the helicase family. AddA subfamily. Heterodimer of AddA and AddB/RexB. The cofactor is Mg(2+).

It carries out the reaction Couples ATP hydrolysis with the unwinding of duplex DNA by translocating in the 3'-5' direction.. It catalyses the reaction ATP + H2O = ADP + phosphate + H(+). Its function is as follows. The heterodimer acts as both an ATP-dependent DNA helicase and an ATP-dependent, dual-direction single-stranded exonuclease. Recognizes the chi site generating a DNA molecule suitable for the initiation of homologous recombination. The AddA nuclease domain is required for chi fragment generation; this subunit has the helicase and 3' -&gt; 5' nuclease activities. The protein is ATP-dependent helicase/nuclease subunit A of Streptococcus pyogenes serotype M3 (strain ATCC BAA-595 / MGAS315).